Consider the following 208-residue polypeptide: Heat shock protein 26 (208 aa).

A phosphoserine mark is found at serine 44, serine 52, and serine 58. One can recognise a sHSP domain in the interval 71–179 (ANRNDIHWPA…KSKERIIQIQ (109 aa)). The disordered stretch occupies residues 187–208 (NVKANESEVKGKENGAPNGKDK). Residues 191 to 208 (NESEVKGKENGAPNGKDK) show a composition bias toward basic and acidic residues.

It belongs to the small heat shock protein (HSP20) family.

This chain is Heat shock protein 26 (Hsp26), found in Drosophila melanogaster (Fruit fly).